Reading from the N-terminus, the 20-residue chain is Maximin-Hu (20 aa).

It belongs to the bombinin family. As to expression, expressed by the skin glands.

It is found in the secreted. Functionally, has antimicrobial activity. The sequence is that of Maximin-Hu from Bombina maxima (Giant fire-bellied toad).